The chain runs to 100 residues: Large ribosomal subunit protein uL23 (100 aa).

This sequence belongs to the universal ribosomal protein uL23 family. In terms of assembly, part of the 50S ribosomal subunit. Contacts protein L29, and trigger factor when it is bound to the ribosome.

Functionally, one of the early assembly proteins it binds 23S rRNA. One of the proteins that surrounds the polypeptide exit tunnel on the outside of the ribosome. Forms the main docking site for trigger factor binding to the ribosome. The chain is Large ribosomal subunit protein uL23 from Xylella fastidiosa (strain M23).